The primary structure comprises 361 residues: 3-galactosyl-N-acetylglucosaminide 4-alpha-L-fucosyltransferase FUT3 (361 aa).

Residues 1–15 are Cytoplasmic-facing; it reads MDPLGAAKPQWPWRR. A helical; Signal-anchor for type II membrane protein membrane pass occupies residues 16–34; it reads CLAALLFQLLVAVCFFSYL. The Lumenal portion of the chain corresponds to 35-361; that stretch reads RVSRDDATGS…TVRSIAAWFT (327 aa). Residues 39 to 58 form a disordered region; sequence DDATGSPRAPSGSSRQDTTP. N-linked (GlcNAc...) asparagine glycans are attached at residues asparagine 154 and asparagine 185.

It belongs to the glycosyltransferase 10 family. Glycosylated. In terms of tissue distribution, highly expressed in stomach, colon, small intestine, lung and kidney and to a lesser extent in salivary gland, bladder, uterus and liver.

It is found in the golgi apparatus. The protein localises to the golgi stack membrane. It catalyses the reaction a beta-D-galactosyl-(1-&gt;3)-N-acetyl-beta-D-glucosaminyl derivative + GDP-beta-L-fucose = a beta-D-galactosyl-(1-&gt;3)-[alpha-L-fucosyl-(1-&gt;4)]-N-acetyl-beta-D-glucosaminyl derivative + GDP + H(+). It carries out the reaction an N-acetyl-alpha-neuraminyl-(2-&gt;3)-beta-D-galactosyl-(1-&gt;4)-N-acetyl-beta-D-glucosaminyl derivative + GDP-beta-L-fucose = an alpha-Neu5Ac-(2-&gt;3)-beta-D-Gal-(1-&gt;4)-[alpha-L-Fuc-(1-&gt;3)]-beta-D-GlcNAc derivative + GDP + H(+). The enzyme catalyses a beta-D-galactosyl-(1-&gt;4)-N-acetyl-beta-D-glucosaminyl derivative + GDP-beta-L-fucose = a beta-D-galactosyl-(1-&gt;4)-[alpha-L-fucosyl-(1-&gt;3)]-N-acetyl-beta-D-glucosaminyl derivative + GDP + H(+). The catalysed reaction is an alpha-Neu5Ac-(2-&gt;3)-beta-D-Gal-(1-&gt;4)-beta-D-GlcNAc-(1-&gt;3)-beta-D-Gal-(1-&gt;4)-[alpha-L-Fuc-(1-&gt;3)]-beta-D-GlcNAc derivative + GDP-beta-L-fucose = an alpha-Neu5Ac-(2-&gt;3)-beta-D-Gal-(1-&gt;4)-[alpha-L-Fuc-(1-&gt;3)]-beta-D-GlcNAc-(1-&gt;3)-beta-D-Gal-(1-&gt;4)-[alpha-L-Fuc-(1-&gt;3)]-beta-D-GlcNAc derivative + GDP + H(+). It catalyses the reaction Lc4Cer + GDP-beta-L-fucose = a lactoside III(4)-a-Fuc-Lc4Cer + GDP + H(+). It carries out the reaction a beta-D-Gal-(1-&gt;3)-beta-D-GlcNAc-(1-&gt;3)-beta-D-Gal-(1-&gt;4)-beta-D-Glc-(1&lt;-&gt;1')-Cer(d18:1(4E)) + GDP-beta-L-fucose = a III(4)-a-Fuc-Lc4Cer(d18:1(4E)) + GDP + H(+). The enzyme catalyses N-acetyl-alpha-neuraminosyl-(2-&gt;3)-beta-D-galactosyl-(1-&gt;3)-[N-acetyl-alpha-neuraminosyl-(2-&gt;6)]-N-acetyl-beta-D-glucosaminyl-(1-&gt;3)-beta-D-galactosyl-(1-&gt;4)-beta-D-glucosyl-(1&lt;-&gt;1')-N-acyl-sphing-4-enine + GDP-beta-L-fucose = N-acetyl-alpha-neuraminosyl-(2-&gt;3)-beta-D-galactosyl-(1-&gt;3)-alpha-L-fucosyl-(1-&gt;4)-[N-acetyl-alpha-neuraminosyl-(2-&gt;6)-N-acetyl-beta-D-glucosaminyl-(1-&gt;3)]-beta-D-galactosyl-(1-&gt;4)-beta-D-glucosyl-(1&lt;-&gt;1')-N-acyl-sphing-4-enine + GDP + H(+). The catalysed reaction is N-acetyl-alpha-neuraminosyl-(2-&gt;3)-beta-D-galactosyl-(1-&gt;3)-N-acetyl-beta-D-glucosaminyl-(1-&gt;3)-beta-D-galactosyl-(1-&gt;4)-beta-D-glucosyl-(1&lt;-&gt;1')-N-acyl-sphing-4-enine + GDP-beta-L-fucose = N-acetyl-alpha-neuraminosyl-(2-&gt;3)-beta-D-galactosyl-(1-&gt;3)-alpha-L-fucosyl-(1-&gt;4)-[N-acetyl-beta-D-glucosaminyl-(1-&gt;3)]-beta-D-galactosyl-(1-&gt;4)-beta-D-glucosyl-(1&lt;-&gt;1')-N-acyl-sphing-4-enine + GDP + H(+). It catalyses the reaction beta-D-galactosyl-(1-&gt;3)-N-acetyl-D-glucosamine + GDP-beta-L-fucose = beta-D-galactosyl-(1-&gt;3)-[alpha-L-fucosyl-(1-&gt;4)]-N-acetyl-D-glucosamine + GDP + H(+). It carries out the reaction alpha-L-Fuc-(1-&gt;2)-beta-D-Gal-(1-&gt;3)-D-GlcNAc + GDP-beta-L-fucose = alpha-L-Fuc-(1-&gt;2)-beta-D-Gal-(1-&gt;3)-[alpha-L-Fuc-(1-&gt;4)]-D-GlcNAc + GDP + H(+). The enzyme catalyses alpha-L-Fuc-(1-&gt;2)-beta-D-Gal-(1-&gt;4)-D-GlcNAc + GDP-beta-L-fucose = alpha-L-Fuc-(1-&gt;2)-beta-D-Gal-(1-&gt;4)-[alpha-L-Fuc-(1-&gt;3)]-D-GlcNAc + GDP + H(+). The catalysed reaction is beta-D-galactosyl-(1-&gt;4)-N-acetyl-D-glucosamine + GDP-beta-L-fucose = beta-D-galactosyl-(1-&gt;4)-[alpha-L-fucosyl-(1-&gt;3)]-N-acetyl-D-glucosamine + GDP + H(+). It catalyses the reaction lactose + GDP-beta-L-fucose = beta-D-galactosyl-(1-&gt;4)-[alpha-L-fucosyl-(1-&gt;3)]-D-glucose + GDP + H(+). It carries out the reaction an alpha-Neu5Ac-(2-&gt;3)-beta-D-Gal-(1-&gt;3)-D-GlcNAc derivative + GDP-beta-L-fucose = an alpha-Neu5Ac-(2-&gt;3)-beta-D-Gal-(1-&gt;3)-[alpha-L-Fuc-(1-&gt;4)]-beta-D-GlcNAc derivative + GDP + H(+). It functions in the pathway protein modification; protein glycosylation. Catalyzes the transfer of L-fucose, from a guanosine diphosphate-beta-L-fucose, to both the subterminal N-acetyl glucosamine (GlcNAc) of type 1 chain (beta-D-Gal-(1-&gt;3)-beta-D-GlcNAc) glycolipids and oligosaccharides via an alpha(1,4) linkage, and the subterminal glucose (Glc) or GlcNAc of type 2 chain (beta-D-Gal-(1-&gt;4)-beta-D-GlcNAc) oligosaccharides via an alpha(1,3) linkage, independently of the presence of terminal alpha-L-fucosyl-(1,2) moieties on the terminal galactose of these acceptors. Through its catalytic activity, participates in the synthesis of antigens of the Lewis blood group system, i.e. Lewis a (Le(a)), lewis b (Le(b)), Lewis x/SSEA-1 (Le(x)) and lewis y (Le(y)) antigens. Also catalyzes the transfer of L-fucose to subterminal GlcNAc of sialyl- and disialyl-lactotetraosylceramide to produce sialyl Lewis a (sLe(a)) and disialyl Lewis a via an alpha(1,4) linkage and therefore may regulate cell surface sLe(a) expression and consequently regulates adhesive properties to E-selectin, cell proliferation and migration. Catalyzes the transfer of an L-fucose to 3'-sialyl-N-acetyllactosamine by an alpha(1,3) linkage, which allows the formation of sialyl-Lewis x structure and therefore may regulate the sialyl-Lewis x surface antigen expression and consequently adhesive properties to E-selectin. Prefers type 1 chain over type 2 acceptors. Type 1 tetrasaccharide is a better acceptor than type 1 disaccharide suggesting that a beta anomeric configuration of GlcNAc in the substrate is preferred. Lewis-positive (Le(+)) individuals have an active enzyme while Lewis-negative (Le(-)) individuals have an inactive enzyme. In Homo sapiens (Human), this protein is 3-galactosyl-N-acetylglucosaminide 4-alpha-L-fucosyltransferase FUT3.